Reading from the N-terminus, the 515-residue chain is Aldehyde dehydrogenase (515 aa).

Positions 1-12 are enriched in polar residues; sequence MTVAEQQPQHQG. The interval 1–20 is disordered; it reads MTVAEQQPQHQGYANPGTPG. NAD(+) is bound at residue 228 to 234; sequence GFGLEAG. Active-site residues include E272 and C311.

This sequence belongs to the aldehyde dehydrogenase family.

The enzyme catalyses an aldehyde + NAD(+) + H2O = a carboxylate + NADH + 2 H(+). This chain is Aldehyde dehydrogenase (aldA), found in Deinococcus radiodurans (strain ATCC 13939 / DSM 20539 / JCM 16871 / CCUG 27074 / LMG 4051 / NBRC 15346 / NCIMB 9279 / VKM B-1422 / R1).